Here is a 200-residue protein sequence, read N- to C-terminus: ATP-dependent Clp protease proteolytic subunit (200 aa).

The Nucleophile role is filled by serine 103. Histidine 128 is an active-site residue.

It belongs to the peptidase S14 family. In terms of assembly, fourteen ClpP subunits assemble into 2 heptameric rings which stack back to back to give a disk-like structure with a central cavity, resembling the structure of eukaryotic proteasomes.

It is found in the cytoplasm. The catalysed reaction is Hydrolysis of proteins to small peptides in the presence of ATP and magnesium. alpha-casein is the usual test substrate. In the absence of ATP, only oligopeptides shorter than five residues are hydrolyzed (such as succinyl-Leu-Tyr-|-NHMec, and Leu-Tyr-Leu-|-Tyr-Trp, in which cleavage of the -Tyr-|-Leu- and -Tyr-|-Trp bonds also occurs).. Its function is as follows. Cleaves peptides in various proteins in a process that requires ATP hydrolysis. Has a chymotrypsin-like activity. Plays a major role in the degradation of misfolded proteins. The chain is ATP-dependent Clp protease proteolytic subunit from Vibrio vulnificus (strain CMCP6).